The following is a 714-amino-acid chain: BRCA1-associated RING domain protein 1 (714 aa).

The RING-type zinc finger occupies 25 to 63 (CPLCLKLLNRPVLLPCDHVFCDSCVHKSSQVESGCPVCK). 2 disordered regions span residues 106 to 165 (YKND…QDWT) and 254 to 283 (KAQNHQQLPKSHTEQDSKRKRDITASDAME). Residues 118–134 (KHGESEDSEMTDKDVSK) are compositionally biased toward basic and acidic residues. Residues 135 to 147 (RSGGTDSSSRDGS) show a composition bias toward low complexity. 2 stretches are compositionally biased toward basic and acidic residues: residues 155 to 165 (SDPRPKHQDWT) and 264 to 283 (SHTEQDSKRKRDITASDAME). The segment at 331 to 382 (ITICGFCQSARVSEATGEMLHYSRGRPVDGDDIFRSNVIHVHSACIEWAPQV) adopts a C2HC pre-PHD-type zinc-finger fold. The PHD-type zinc finger occupies 402–451 (IKCTKCSLKGAALGCFVKSCRRSYHVPCAREISRCRWDYEDFLLLCPAHS). 2 BRCT domains span residues 482–577 (EQTP…PFEI) and 598–713 (NKPK…HPVI).

Component of a DNA-protein complex on WUS and WOX5 promoters. Interacts with SYD. Forms heterodimer with BRCA1. In terms of tissue distribution, expressed in the shoot apical meristem (SAM), roots, flowers, embryos and seedlings. Mostly expressed in flowers and siliques, and, to a lower extent, in roots, rosette leaves, inflorescence and young cauline leaves.

It localises to the nucleus. Its function is as follows. Binds specifically to H3K4me3 regions of target genes (e.g. WUS and WOX5) promoters to repress their transcription via chromatin remodeling. Required for the shoot apical meristem (SAM) organization and maintenance, by confining WUS expression to the organizing center, and for the quiescent center (QC) development in the root apical meristem (RAM), by repressing WOX5 expression in the root proximal meristem. Plays a role in DNA repair and in cell-cycle control. Required for the repair of DNA double-strand breaks (DSBs), both natural and induced by genotoxic stress, by homologous recombination (HR). This is BRCA1-associated RING domain protein 1 from Arabidopsis thaliana (Mouse-ear cress).